The sequence spans 92 residues: Small ribosomal subunit protein uS19c (92 aa).

Belongs to the universal ribosomal protein uS19 family.

It localises to the plastid. It is found in the chloroplast. Its function is as follows. Protein S19 forms a complex with S13 that binds strongly to the 16S ribosomal RNA. The polypeptide is Small ribosomal subunit protein uS19c (Cycas taitungensis (Prince sago)).